A 560-amino-acid polypeptide reads, in one-letter code: Beta-glucosidase 26, peroxisomal (560 aa).

A beta-D-glucoside contacts are provided by residues glutamine 33, histidine 137, 182–183 (NE), tyrosine 326, glutamate 398, tryptophan 450, 457–458 (EW), and tyrosine 466. Glutamate 183 functions as the Proton donor in the catalytic mechanism. Catalysis depends on glutamate 398, which acts as the Nucleophile.

Belongs to the glycosyl hydrolase 1 family.

It is found in the peroxisome. The enzyme catalyses Hydrolysis of terminal, non-reducing beta-D-glucosyl residues with release of beta-D-glucose.. Functionally, possesses beta-glucosidase activity toward 4-methyl-umbelliferyl-beta-D-glucoside in vitro. Possesses myrosinase activity toward indol-3-yl-methylglucosinolate (I3M) and 4-methoxy-indol-3-yl-methylglucosinolate (4MO-I3M) in vivo. Component of an inducible preinvasion resistance mechanism that prevents penetration of the nonhost fungal species B.graminis and E.pisi. Involved in indole glucosinolate (IGS) activation during pattern-triggered immunity (PTI). Functions as a myrosinase for the breakdown of flg22-triggered IGS. Required for both callose deposition and glucosinolate activation during pathogen-triggered resistance. During fungal attack, required for IGS activation that mediates broad-spectrum antifungal defense. The chain is Beta-glucosidase 26, peroxisomal from Arabidopsis thaliana (Mouse-ear cress).